A 212-amino-acid polypeptide reads, in one-letter code: Ropporin-1 (212 aa).

The region spanning 12–43 is the RIIa domain; that stretch reads PELPELLKQFTKAAIRSQPQDLIQWAAEYFGA. At S56 the chain carries Phosphoserine. Residues 209 to 212 are interaction with RHPN1; sequence VRLE.

This sequence belongs to the ropporin family. In terms of assembly, homodimer. Interacts with AKAP3. May interact with SPA17. Interacts with RHPN1. Interacts with FSCB; the interaction increases upon spermatozoa capacitation conditions. Interacts with CFAP61. Post-translationally, sumoylated, sumoylation decreases upon spermatozoa capacitation conditions.

The protein localises to the cell projection. The protein resides in the cilium. It localises to the flagellum. Important for male fertility. With ROPN1L, involved in fibrous sheath integrity and sperm motility, plays a role in PKA-dependent signaling processes required for spermatozoa capacitation. The sequence is that of Ropporin-1 (ROPN1) from Bos taurus (Bovine).